We begin with the raw amino-acid sequence, 155 residues long: Protein-export protein SecB (155 aa).

It belongs to the SecB family. Homotetramer, a dimer of dimers. One homotetramer interacts with 1 SecA dimer.

The protein resides in the cytoplasm. Its function is as follows. One of the proteins required for the normal export of preproteins out of the cell cytoplasm. It is a molecular chaperone that binds to a subset of precursor proteins, maintaining them in a translocation-competent state. It also specifically binds to its receptor SecA. This is Protein-export protein SecB from Escherichia coli O139:H28 (strain E24377A / ETEC).